The following is a 277-amino-acid chain: Bifunctional protein FolD (277 aa).

NADP(+) contacts are provided by residues 164 to 166 (GRS), Ser189, and Thr230.

It belongs to the tetrahydrofolate dehydrogenase/cyclohydrolase family. Homodimer.

The catalysed reaction is (6R)-5,10-methylene-5,6,7,8-tetrahydrofolate + NADP(+) = (6R)-5,10-methenyltetrahydrofolate + NADPH. It catalyses the reaction (6R)-5,10-methenyltetrahydrofolate + H2O = (6R)-10-formyltetrahydrofolate + H(+). It functions in the pathway one-carbon metabolism; tetrahydrofolate interconversion. In terms of biological role, catalyzes the oxidation of 5,10-methylenetetrahydrofolate to 5,10-methenyltetrahydrofolate and then the hydrolysis of 5,10-methenyltetrahydrofolate to 10-formyltetrahydrofolate. The sequence is that of Bifunctional protein FolD from Clostridium perfringens (strain SM101 / Type A).